A 367-amino-acid chain; its full sequence is Peptide chain release factor 2 (367 aa).

Glutamine 251 carries the N5-methylglutamine modification.

The protein belongs to the prokaryotic/mitochondrial release factor family. In terms of processing, methylated by PrmC. Methylation increases the termination efficiency of RF2.

It is found in the cytoplasm. Peptide chain release factor 2 directs the termination of translation in response to the peptide chain termination codons UGA and UAA. In Nautilia profundicola (strain ATCC BAA-1463 / DSM 18972 / AmH), this protein is Peptide chain release factor 2.